The chain runs to 1233 residues: Pesticidal crystal protein Cry1Bc (1233 aa).

This sequence belongs to the delta endotoxin family.

Functionally, promotes colloidosmotic lysis by binding to the midgut epithelial cells of insects. The sequence is that of Pesticidal crystal protein Cry1Bc (cry1Bc) from Bacillus thuringiensis subsp. morrisoni.